The following is a 98-amino-acid chain: Prostate and testis expressed protein 3 (98 aa).

An N-terminal signal peptide occupies residues 1–20 (MNKHFLFLFLLYCLIVAVTS). Positions 21–97 (LQCITCHLRT…CCNYNYCNFK (77 aa)) constitute a UPAR/Ly6 domain. Intrachain disulfides connect C23–C50, C26–C35, C42–C68, and C72–C88.

The protein belongs to the PATE family. As to expression, specifically expressed in prostate and testis.

It is found in the secreted. This is Prostate and testis expressed protein 3 (PATE3) from Homo sapiens (Human).